Reading from the N-terminus, the 57-residue chain is DNA-directed RNA polymerase subunit Rpo6 (57 aa).

Belongs to the archaeal Rpo6/eukaryotic RPB6 RNA polymerase subunit family. In terms of assembly, part of the RNA polymerase complex.

It localises to the cytoplasm. The enzyme catalyses RNA(n) + a ribonucleoside 5'-triphosphate = RNA(n+1) + diphosphate. In terms of biological role, DNA-dependent RNA polymerase (RNAP) catalyzes the transcription of DNA into RNA using the four ribonucleoside triphosphates as substrates. This Thermococcus onnurineus (strain NA1) protein is DNA-directed RNA polymerase subunit Rpo6.